The sequence spans 288 residues: Homoserine kinase (288 aa).

Residue 79 to 89 (PLARGLGSSSS) participates in ATP binding.

It belongs to the GHMP kinase family. Homoserine kinase subfamily.

Its subcellular location is the cytoplasm. It catalyses the reaction L-homoserine + ATP = O-phospho-L-homoserine + ADP + H(+). It functions in the pathway amino-acid biosynthesis; L-threonine biosynthesis; L-threonine from L-aspartate: step 4/5. Catalyzes the ATP-dependent phosphorylation of L-homoserine to L-homoserine phosphate. The polypeptide is Homoserine kinase (Streptococcus gordonii (strain Challis / ATCC 35105 / BCRC 15272 / CH1 / DL1 / V288)).